Consider the following 276-residue polypeptide: Large ribosomal subunit protein uL2 (276 aa).

Positions 213-264 (WLGRRPHNRGVVMNPVDHPHGGGEGRTSGGRHPVTPWGKPTKGYKTRTNKRT) are disordered.

It belongs to the universal ribosomal protein uL2 family. Part of the 50S ribosomal subunit. Forms a bridge to the 30S subunit in the 70S ribosome.

Functionally, one of the primary rRNA binding proteins. Required for association of the 30S and 50S subunits to form the 70S ribosome, for tRNA binding and peptide bond formation. It has been suggested to have peptidyltransferase activity; this is somewhat controversial. Makes several contacts with the 16S rRNA in the 70S ribosome. The sequence is that of Large ribosomal subunit protein uL2 from Granulibacter bethesdensis (strain ATCC BAA-1260 / CGDNIH1).